The primary structure comprises 120 residues: Ubiquitin domain-containing protein TINCR (120 aa).

The region spanning 14 to 83 (YHIKVHLADE…LQDGSVLLLV (70 aa)) is the Ubiquitin-like domain.

Detected in stratum corneum (at protein level).

The protein is Ubiquitin domain-containing protein TINCR of Homo sapiens (Human).